A 472-amino-acid polypeptide reads, in one-letter code: 3-isopropylmalate dehydratase large subunit (472 aa).

Residues C352, C413, and C416 each coordinate [4Fe-4S] cluster.

Belongs to the aconitase/IPM isomerase family. LeuC type 1 subfamily. As to quaternary structure, heterodimer of LeuC and LeuD. Requires [4Fe-4S] cluster as cofactor.

It catalyses the reaction (2R,3S)-3-isopropylmalate = (2S)-2-isopropylmalate. Its pathway is amino-acid biosynthesis; L-leucine biosynthesis; L-leucine from 3-methyl-2-oxobutanoate: step 2/4. Catalyzes the isomerization between 2-isopropylmalate and 3-isopropylmalate, via the formation of 2-isopropylmaleate. The sequence is that of 3-isopropylmalate dehydratase large subunit from Laribacter hongkongensis (strain HLHK9).